We begin with the raw amino-acid sequence, 279 residues long: Large ribosomal subunit protein uL2 (279 aa).

A disordered region spans residues 223-279; the sequence is VAMNPVDHPMGGGEGRSSGGHPRSRKGLYAKGGKTRSANKYSKNMIVKKRVNKRLSK. Positions 268-279 are enriched in basic residues; the sequence is IVKKRVNKRLSK.

Belongs to the universal ribosomal protein uL2 family. As to quaternary structure, part of the 50S ribosomal subunit. Forms a bridge to the 30S subunit in the 70S ribosome.

Its function is as follows. One of the primary rRNA binding proteins. Required for association of the 30S and 50S subunits to form the 70S ribosome, for tRNA binding and peptide bond formation. It has been suggested to have peptidyltransferase activity; this is somewhat controversial. Makes several contacts with the 16S rRNA in the 70S ribosome. The sequence is that of Large ribosomal subunit protein uL2 from Cytophaga hutchinsonii (strain ATCC 33406 / DSM 1761 / CIP 103989 / NBRC 15051 / NCIMB 9469 / D465).